Reading from the N-terminus, the 210-residue chain is Secreted isochorismatase effector Isc1 (210 aa).

Residues D25, K90, and C124 contribute to the active site.

Belongs to the isochorismatase family.

The protein localises to the secreted. It is found in the host cytoplasm. Its subcellular location is the host nucleus. It carries out the reaction isochorismate + H2O = (2S,3S)-2,3-dihydroxy-2,3-dihydrobenzoate + pyruvate. Its function is as follows. Secreted isochorismatase required for full virulence of P.sojae. Suppresses salicylate-mediated innate immunity of the host by disrupting the plant salicylate metabolism pathway via hydrolysis of its isochorismate precursor. The polypeptide is Secreted isochorismatase effector Isc1 (Phytophthora sojae (strain P6497) (Soybean stem and root rot agent)).